Consider the following 565-residue polypeptide: Oxygen-dependent choline dehydrogenase (565 aa).

7 to 36 (DYIICGAGSAGNVLATRLTEDPGVTVLLLE) contributes to the FAD binding site. Residue H474 is the Proton acceptor of the active site.

The protein belongs to the GMC oxidoreductase family. FAD serves as cofactor.

The catalysed reaction is choline + A = betaine aldehyde + AH2. It carries out the reaction betaine aldehyde + NAD(+) + H2O = glycine betaine + NADH + 2 H(+). It participates in amine and polyamine biosynthesis; betaine biosynthesis via choline pathway; betaine aldehyde from choline (cytochrome c reductase route): step 1/1. Its function is as follows. Involved in the biosynthesis of the osmoprotectant glycine betaine. Catalyzes the oxidation of choline to betaine aldehyde and betaine aldehyde to glycine betaine at the same rate. In Burkholderia pseudomallei (strain 1710b), this protein is Oxygen-dependent choline dehydrogenase.